We begin with the raw amino-acid sequence, 115 residues long: MNLYTVIFINILLSLTLILVAFWLPQMNLYSEKANPYECGFDPTSSARLPFSMKFFLVAITFLLFDLEIALLLPLPWAIQTIKTSTMMIMAFILVTILSLGLAYEWTQKGLEWTE.

The next 3 helical transmembrane spans lie at 3 to 23 (LYTVIFINILLSLTLILVAFW), 55 to 75 (FFLVAITFLLFDLEIALLLPL), and 86 to 106 (TMMIMAFILVTILSLGLAYEW).

Belongs to the complex I subunit 3 family. Core subunit of respiratory chain NADH dehydrogenase (Complex I) which is composed of 45 different subunits. Interacts with TMEM186. Interacts with TMEM242.

The protein localises to the mitochondrion inner membrane. The enzyme catalyses a ubiquinone + NADH + 5 H(+)(in) = a ubiquinol + NAD(+) + 4 H(+)(out). In terms of biological role, core subunit of the mitochondrial membrane respiratory chain NADH dehydrogenase (Complex I) which catalyzes electron transfer from NADH through the respiratory chain, using ubiquinone as an electron acceptor. Essential for the catalytic activity of complex I. This Mus musculus (Mouse) protein is NADH-ubiquinone oxidoreductase chain 3.